A 113-amino-acid chain; its full sequence is Integration host factor subunit alpha (113 aa).

Disordered regions lie at residues 59–80 (GNFQ…GETI) and 94–113 (QKLK…ASAE). The span at 104-113 (NSPPDPASAE) shows a compositional bias: pro residues.

Belongs to the bacterial histone-like protein family. As to quaternary structure, heterodimer of an alpha and a beta chain.

This protein is one of the two subunits of integration host factor, a specific DNA-binding protein that functions in genetic recombination as well as in transcriptional and translational control. In Bordetella pertussis (strain Tohama I / ATCC BAA-589 / NCTC 13251), this protein is Integration host factor subunit alpha.